The primary structure comprises 67 residues: Large ribosomal subunit protein uL29 (67 aa).

This sequence belongs to the universal ribosomal protein uL29 family.

This Thermus thermophilus protein is Large ribosomal subunit protein uL29 (rpmC).